A 124-amino-acid chain; its full sequence is Salivary protein 15 Iric-3 (124 aa).

The signal sequence occupies residues 1-22 (MESFVAMKVVCIILLFVIAAEA). N-linked (GlcNAc...) asparagine glycosylation is found at N82 and N93. The interval 105–124 (GPNNQTCHKKDECVGYIPGC) is CD4-binding.

Belongs to the salp15 family. In terms of assembly, interacts with host CD4. Interacts with host DC-SIGN (CD209). Interacts with Borrelia outer surface protein C (OspC). As to expression, expressed in salivary glands. Detected in fed adult female.

It localises to the secreted. Its function is as follows. Salivary tick protein that downregulates host immune system by binding to both dendritic cells, and CD4(+) T cells. Specifically binds to the CD4 coreceptor on T cells. This interaction prevents the activation of the Src kinase, Lck, and its downstream substrate Zap-70, and results in deficient activation of PLCgamma1, the repression of calcium fluxes triggered by T-cell antigen receptor (TCR) ligation, and a subsequent reduction in interleukin-2 production. This salivary protein also binds to DC-SIGN (CD209) on dendritic cells (DC) and activates the Raf-1 kinase/MEK signaling pathway that results in down-regulating expression of pro-inflammatory cytokines. Furthermore, it inhibits T cell proliferation induced by DCs. In addition, it inhibits in vitro keratinocyte inflammation induced by Borrelia burgdorferi or by the major outer surface protein (OspC) of Borrelia. In addition, it downregulates chemokines and monocyte chemoattractant protein 1, as well as several antimicrobial peptides such as defensins, cathelicidin, psoriasin, and RNase 7. Apart from its immunomodulatory activities, it is also associated with protection of Borrelia spirochetes from antibody-mediated killing through its binding to OspC. In vivo, tests on different immune disease animal models show promising therapeutic results, e.g., in inhibiting HIV infection, experimental autoimmune encephalomyelitis, transplantation rejection, and asthma. The polypeptide is Salivary protein 15 Iric-3 (Ixodes ricinus (Common tick)).